The sequence spans 598 residues: Nuclear receptor subfamily 4immunitygroup A member 1 (598 aa).

Disordered regions lie at residues 1-44, 131-158, 177-206, and 221-265; these read MPCI…EAAP, YYGSPCSAPSPSTPSFQPPQLSPWDGSF, LPKASGPPQPPAFFSFSPPTGPSPSLAQSP, and GESY…GSEG. Positions 134–145 are enriched in low complexity; it reads SPCSAPSPSTPS. The required for nuclear import stretch occupies residues 171–466; the sequence is RAWTEQLPKA…PGEGKLIFCS (296 aa). The segment at residues 264–339 is a DNA-binding region (nuclear receptor); the sequence is EGRCAVCGDN…VGMVKEVVRT (76 aa). 2 consecutive NR C4-type zinc fingers follow at residues 267–287 and 303–327; these read CAVCGDNASCQHYGVRTCEGC and CLANKDCPVDKRRRNRCQFCRFQKC. The tract at residues 268-354 is required for binding NBRE-containing DNA; sequence AVCGDNASCQ…RRGRLPSKPK (87 aa). The interval 299–361 is required for the interaction with RXRA; sequence AKYICLANKD…KPKQPPDASP (63 aa). At S341 the chain carries Phosphoserine; by PKA. The interval 341-361 is disordered; the sequence is SLKGRRGRLPSKPKQPPDASP. Position 351 is a phosphoserine (S351). The region spanning 360–595 is the NR LBD domain; sequence SPANLLTSLV…PIIDKIFMDT (236 aa). The tract at residues 521-544 is binds lipopolysaccharide; that stretch reads PRRVEELQNRIASCLKEHVAAVAG. The tract at residues 584 to 595 is AF-2; sequence PPPIIDKIFMDT.

It belongs to the nuclear hormone receptor family. NR4 subfamily. As to quaternary structure, binds the NGFI-B response element (NBRE) as a monomer. Binds the Nur response element (NurRE), consisting of two inverse NBRE-related octanucleotide repeats separated by 6 base-pairs, as a dimer. Interacts (via N-terminus) with NLRP3 (via LRR repeat domain); the interaction is direct, requires binding of NR4A1/Nur77 to NBRE-containing dsDNA and lipopolysaccharide, and leads to non-canonical NLRP3 inflammasome activation. Interacts with GADD45GIP1. Interacts with STK11. Interacts with IFI27. Heterodimer (via DNA-binding domain) with RXRA (via C-terminus); DNA-binding of the heterodimer is enhanced by 9-cis retinoic acid. Competes for the RXRA interaction with EP300 and thereby attenuates EP300 mediated acetylation of RXRA. Interacts with NCOA1. Interacts with NCOA2. Interacts with NCOA3. Requires Zn(2+) as cofactor. Phosphorylated at Ser-351 by RPS6KA1 and RPS6KA3 in response to mitogenic or stress stimuli. In terms of processing, acetylated by p300/CBP, acetylation increases stability. Deacetylated by HDAC1. As to expression, fetal muscle and adult liver, brain and thyroid.

The protein resides in the nucleus. It is found in the cytoplasm. It localises to the cytosol. The protein localises to the mitochondrion. With respect to regulation, its transcription factor activity is activated by binding cytosporone B (Csn-B) via its ligand-binding (NR LBD) domain and stimulates recruitment of coactivators NCOA1 and NCOA2, but not NCOA3, to promoters. Csn-B-binding is also accompanied by its translocation to the mitochondrion. Its transcription factor activity is activated by corticotropin-releasing hormone (CRH) and forskolin. Not activated by binding cytosporone C (Csn-C). Orphan nuclear receptor. Binds the NGFI-B response element (NBRE) 5'-AAAGGTCA-3'. Binds 9-cis-retinoic acid outside of its ligand-binding (NR LBD) domain. Participates in energy homeostasis by sequestrating the kinase STK11 in the nucleus, thereby attenuating cytoplasmic AMPK activation. Regulates the inflammatory response in macrophages by regulating metabolic adaptations during inflammation, including repressing the transcription of genes involved in the citric acid cycle (TCA). Inhibits NF-kappa-B signaling by binding to low-affinity NF-kappa-B binding sites, such as at the IL2 promoter. May act concomitantly with NR4A2 in regulating the expression of delayed-early genes during liver regeneration. Plays a role in the vascular response to injury. Functionally, in the cytosol, upon its detection of both bacterial lipopolysaccharide (LPS) and NBRE-containing mitochondrial DNA released by GSDMD pores during pyroptosis, it promotes non-canonical NLRP3 inflammasome activation by stimulating association of NLRP3 and NEK7. This is Nuclear receptor subfamily 4immunitygroup A member 1 (NR4A1) from Homo sapiens (Human).